The primary structure comprises 88 residues: Small ribosomal subunit protein uS17 (88 aa).

The protein belongs to the universal ribosomal protein uS17 family. As to quaternary structure, part of the 30S ribosomal subunit.

One of the primary rRNA binding proteins, it binds specifically to the 5'-end of 16S ribosomal RNA. In Azotobacter vinelandii (strain DJ / ATCC BAA-1303), this protein is Small ribosomal subunit protein uS17.